The primary structure comprises 317 residues: Phosphopantothenate--cysteine ligase 1 (317 aa).

Belongs to the PPC synthetase family. In terms of assembly, homodimer.

It carries out the reaction (R)-4'-phosphopantothenate + L-cysteine + ATP = N-[(R)-4-phosphopantothenoyl]-L-cysteine + AMP + diphosphate + H(+). It participates in cofactor biosynthesis; coenzyme A biosynthesis; CoA from (R)-pantothenate: step 2/5. In terms of biological role, catalyzes the first step in the biosynthesis of coenzyme A from vitamin B5/pantothenate, where cysteine is conjugated to 4'-phosphopantothenate to form 4-phosphopantothenoylcysteine. The catalytic activity is not CTP- but ATP-dependent. The sequence is that of Phosphopantothenate--cysteine ligase 1 (PPCS1) from Arabidopsis thaliana (Mouse-ear cress).